Here is a 70-residue protein sequence, read N- to C-terminus: Myotoxin (70 aa).

A signal peptide spans 1 to 22 (MKILYLLFAFLFLAFLSEPGNA). Intrachain disulfides connect C26–C58, C33–C52, and C40–C59.

Belongs to the crotamine-myotoxin family. In terms of assembly, monomer. In terms of tissue distribution, expressed by the venom gland.

The protein localises to the secreted. Its function is as follows. Cationic peptide that possesses multiple functions. It acts as a cell-penetrating peptide (CPP), and as a potent voltage-gated potassium channel (Kv) inhibitor. It exhibits antimicrobial activities, hind limb paralysis, and severe muscle necrosis by a non-enzymatic mechanism. This Crotalus adamanteus (Eastern diamondback rattlesnake) protein is Myotoxin.